The chain runs to 834 residues: DNA-directed RNA polymerase subunit beta' (834 aa).

The segment covering 1 to 22 has biased composition (polar residues); the sequence is MTYSNKPTGSSLRSSRNSTLEP. Residues 1–45 are disordered; the sequence is MTYSNKPTGSSLRSSRNSTLEPQSLVHREESKRQEGPKGQNLRIG. A compositionally biased stretch (basic and acidic residues) spans 26 to 36; it reads VHREESKRQEG. Positions 101, 103, 118, and 121 each coordinate Zn(2+). 3 residues coordinate Mg(2+): Asp-606, Asp-608, and Asp-610.

The protein belongs to the RNA polymerase beta' chain family. RpoC1 subfamily. In plastids the minimal PEP RNA polymerase catalytic core is composed of four subunits: alpha, beta, beta', and beta''. When a (nuclear-encoded) sigma factor is associated with the core the holoenzyme is formed, which can initiate transcription. It depends on Mg(2+) as a cofactor. Zn(2+) is required as a cofactor.

The protein localises to the plastid. The protein resides in the chloroplast. The catalysed reaction is RNA(n) + a ribonucleoside 5'-triphosphate = RNA(n+1) + diphosphate. DNA-dependent RNA polymerase catalyzes the transcription of DNA into RNA using the four ribonucleoside triphosphates as substrates. This Staurastrum punctulatum (Green alga) protein is DNA-directed RNA polymerase subunit beta'.